The following is a 212-amino-acid chain: Pyridoxine/pyridoxamine 5'-phosphate oxidase (212 aa).

Substrate is bound by residues Arg8–Tyr11 and Lys66. Residues Arg61–Lys66, Phe76–Thr77, Arg82, Lys83, and Gln105 each bind FMN. Substrate-binding residues include Tyr123, Arg127, and Ser131. FMN-binding positions include Gln140–Ser141 and Trp185. Arg191 to His193 provides a ligand contact to substrate. FMN is bound at residue Arg195.

This sequence belongs to the pyridoxamine 5'-phosphate oxidase family. Homodimer. It depends on FMN as a cofactor.

It catalyses the reaction pyridoxamine 5'-phosphate + O2 + H2O = pyridoxal 5'-phosphate + H2O2 + NH4(+). The enzyme catalyses pyridoxine 5'-phosphate + O2 = pyridoxal 5'-phosphate + H2O2. It participates in cofactor metabolism; pyridoxal 5'-phosphate salvage; pyridoxal 5'-phosphate from pyridoxamine 5'-phosphate: step 1/1. Its pathway is cofactor metabolism; pyridoxal 5'-phosphate salvage; pyridoxal 5'-phosphate from pyridoxine 5'-phosphate: step 1/1. Catalyzes the oxidation of either pyridoxine 5'-phosphate (PNP) or pyridoxamine 5'-phosphate (PMP) into pyridoxal 5'-phosphate (PLP). The chain is Pyridoxine/pyridoxamine 5'-phosphate oxidase from Shewanella sp. (strain MR-7).